Here is a 187-residue protein sequence, read N- to C-terminus: NADH-quinone oxidoreductase subunit B (187 aa).

Residues Cys-66, Cys-67, Cys-131, and Cys-161 each contribute to the [4Fe-4S] cluster site.

This sequence belongs to the complex I 20 kDa subunit family. NDH-1 is composed of 14 different subunits. Subunits NuoB, C, D, E, F, and G constitute the peripheral sector of the complex. [4Fe-4S] cluster is required as a cofactor.

It localises to the cell inner membrane. It catalyses the reaction a quinone + NADH + 5 H(+)(in) = a quinol + NAD(+) + 4 H(+)(out). Its function is as follows. NDH-1 shuttles electrons from NADH, via FMN and iron-sulfur (Fe-S) centers, to quinones in the respiratory chain. The immediate electron acceptor for the enzyme in this species is believed to be ubiquinone. Couples the redox reaction to proton translocation (for every two electrons transferred, four hydrogen ions are translocated across the cytoplasmic membrane), and thus conserves the redox energy in a proton gradient. This Methylocella silvestris (strain DSM 15510 / CIP 108128 / LMG 27833 / NCIMB 13906 / BL2) protein is NADH-quinone oxidoreductase subunit B.